The following is a 149-amino-acid chain: Transcriptional repressor NrdR (149 aa).

The segment at 3 to 34 is a zinc-finger region; it reads CPFCFAVDTKVIDSRLVGEGSSVRRRRQCLVC. In terms of domain architecture, ATP-cone spans 49-139; it reads PRVVKSNDVR…VYRSFEDIKE (91 aa).

This sequence belongs to the NrdR family. Zn(2+) is required as a cofactor.

Functionally, negatively regulates transcription of bacterial ribonucleotide reductase nrd genes and operons by binding to NrdR-boxes. The polypeptide is Transcriptional repressor NrdR (Escherichia fergusonii (strain ATCC 35469 / DSM 13698 / CCUG 18766 / IAM 14443 / JCM 21226 / LMG 7866 / NBRC 102419 / NCTC 12128 / CDC 0568-73)).